The chain runs to 431 residues: Adenylosuccinate synthetase (431 aa).

GTP is bound by residues 12–18 (GDEGKGK) and 40–42 (GHT). Catalysis depends on Asp13, which acts as the Proton acceptor. Mg(2+)-binding residues include Asp13 and Gly40. IMP is bound by residues 13–16 (DEGK), 38–41 (NAGH), Thr129, Arg143, Gln224, and Thr239. The active-site Proton donor is His41. Residue Lys292 forms an Isoglutamyl lysine isopeptide (Lys-Gln) (interchain with Q-Cter in protein Pup) linkage. Residue 299-305 (VTTGRAR) participates in substrate binding. Arg303 contributes to the IMP binding site. GTP contacts are provided by residues Arg305, 331 to 333 (KLD), and 413 to 415 (GVG).

This sequence belongs to the adenylosuccinate synthetase family. Homodimer. It depends on Mg(2+) as a cofactor.

The protein localises to the cytoplasm. It carries out the reaction IMP + L-aspartate + GTP = N(6)-(1,2-dicarboxyethyl)-AMP + GDP + phosphate + 2 H(+). It functions in the pathway purine metabolism; AMP biosynthesis via de novo pathway; AMP from IMP: step 1/2. In terms of biological role, plays an important role in the de novo pathway of purine nucleotide biosynthesis. Catalyzes the first committed step in the biosynthesis of AMP from IMP. The polypeptide is Adenylosuccinate synthetase (Mycolicibacterium smegmatis (strain ATCC 700084 / mc(2)155) (Mycobacterium smegmatis)).